The sequence spans 325 residues: MPVFDYEDIQLVPNKCIVKSRSEVNTKVKFGPMTFKIPVVPANMQTIIDENLAVWLAKNGYFYIMHRFYENERVDFVKNMHDKGLFASISVGVKPAEYDLIDELSQKNLVPEYITIDIAHGHSDTVINMIKHIKHKLPGVFVIAGNVGTPEAVRELENAGADATKVGIGPGKACITKLKTGFGTGGWQLAAIRACAKAASKPIVADGGIRNNGDIAKSIRFGASMCMIGSLFAGHDETPGDIIEKDGKKFKTYFGSASQYQKGEYKNVEGKKLLLPYKGKIADTLREMQEDLQSAISYAGGKELLALRKVDYVIVKNSIYNGDML.

Cys174 serves as the catalytic Thioimidate intermediate. Ile203–Cys226 lines the NADP(+) pocket.

It belongs to the IMPDH/GMPR family. GuaC type 2 subfamily.

It carries out the reaction IMP + NH4(+) + NADP(+) = GMP + NADPH + 2 H(+). In terms of biological role, catalyzes the irreversible NADPH-dependent deamination of GMP to IMP. It functions in the conversion of nucleobase, nucleoside and nucleotide derivatives of G to A nucleotides, and in maintaining the intracellular balance of A and G nucleotides. The sequence is that of GMP reductase from Ligilactobacillus salivarius (strain UCC118) (Lactobacillus salivarius).